A 304-amino-acid polypeptide reads, in one-letter code: ATP synthase gamma chain (304 aa).

Belongs to the ATPase gamma chain family. F-type ATPases have 2 components, CF(1) - the catalytic core - and CF(0) - the membrane proton channel. CF(1) has five subunits: alpha(3), beta(3), gamma(1), delta(1), epsilon(1). CF(0) has three main subunits: a, b and c.

Its subcellular location is the cell membrane. Produces ATP from ADP in the presence of a proton gradient across the membrane. The gamma chain is believed to be important in regulating ATPase activity and the flow of protons through the CF(0) complex. The protein is ATP synthase gamma chain of Chloroherpeton thalassium (strain ATCC 35110 / GB-78).